Here is a 908-residue protein sequence, read N- to C-terminus: MQISLVKIRNKFKQRNRGSFRQWVGKLSNGLMIPIAVLPLAGIFLGIGDAISSNSSGIVGVKFFGEFIKQGGNVVFANLPILFAVAIAITFSQDAGVAGFSAFVFWATMNAFMSSLIIPVDANNTASGYNILYWKAVPQSAIASTLGLNSLSTSVFGGIIVGALTAYLYNKFYAIRLPDVIGFFSGTRFVPIICMTIAIPVALLLLMVWPGVSILLNLIGTGLGILGGRGYGANSLIFGYIERALIPFGVHHAFYAPLWYTSAGGSLQEIANQQVWIRAPGSDYVTRVIGWEDFNTPGKWVIPAALANGTSGMMNGATTTGQDSTSALSKYMSKESTNFLSWKELVDGLTRKGNFDELAKNGLLDGSNKIWIGLNQSGILGKKVLLSDGKDYTITFKTFANTTPTFWSHGAHALLPISGTPSAITNGVTVNGTANSKTYNVSQFTVAVPSLNPAQYSQGKFPFMLIGIPAAGLAMILAAPKGRRKEASSIIGSAAFTSFLTGITEPFEFTFLFLAPWLFYGIHAVLAAVSFWLMNLLSANVGQTFSGSFIDFILYGALPDGRGWLANSYLVPIIGIFLALIYFPTFYFLTIRFNLATPGRGGKLITKKEYLAAKAAQKTDQTTNTNFNQTQIEAGMLLRAYGGSENIAELGACITKLRVTVKNPELVNETIIKDLGAAGVMRTTPTFFVAVFGTRAAVYKSAMQDIIQGKVNWTELQKVLDKNDSTVEKPEIKPTPVLKVQDEIVILSPVNGTLKPLTQVPDDTFKNRLVGDGIAILPSDGHFKAPGDVGVKTELAFPTGHAFIFDVDGVKVMLHIGIDTVKINADKKPGEQLEVFDVKTKQGEYTKLKSESVVEVDLKKLKRKYDPITPFIVMQESLDNFKLVPIRQRGEIKVGQPLFKLIYKDKKS.

The region spanning 1–264 (MQISLVKIRN…YAPLWYTSAG (264 aa)) is the PTS EIIC type-1; first part domain. 5 helical membrane-spanning segments follow: residues 31 to 51 (LMIP…GDAI), 71 to 91 (GGNV…AITF), 100 to 120 (FSAF…IIPV), 155 to 175 (VFGG…FYAI), and 189 to 209 (FVPI…LMVW). The tract at residues 265 to 450 (GSLQEIANQQ…VSQFTVAVPS (186 aa)) is unknown. Residues 451 to 602 (LNPAQYSQGK…FNLATPGRGG (152 aa)) form the PTS EIIC type-1; second part domain. 5 helical membrane passes run 459–479 (GKFP…ILAA), 487–507 (ASSI…TEPF), 509–529 (FTFL…LAAV), 536–556 (LLSA…ILYG), and 571–591 (VPII…FLTI). One can recognise a PTS EIIB type-1 domain in the interval 631 to 713 (QIEAGMLLRA…QDIIQGKVNW (83 aa)). Residue Cys-653 is the Phosphocysteine intermediate; for EIIB activity of the active site. Residues 762 to 875 (DDTFKNRLVG…DPITPFIVMQ (114 aa)) form the PTS EIIA type-1 domain. His-815 acts as the Tele-phosphohistidine intermediate; for EIIA activity in catalysis.

It is found in the cell membrane. The enzyme catalyses N(pros)-phospho-L-histidyl-[protein] + D-glucose(out) = D-glucose 6-phosphate(in) + L-histidyl-[protein]. Its function is as follows. The phosphoenolpyruvate-dependent sugar phosphotransferase system (sugar PTS), a major carbohydrate active transport system, catalyzes the phosphorylation of incoming sugar substrates concomitantly with their translocation across the cell membrane. This system is involved in glucose transport. The chain is PTS system glucose-specific EIICBA component (ptsG) from Mycoplasma genitalium (strain ATCC 33530 / DSM 19775 / NCTC 10195 / G37) (Mycoplasmoides genitalium).